The following is a 274-amino-acid chain: Cell division protein FtsQ (274 aa).

Residues 1 to 24 (MRDLHAKKQRVPHNRVKKPPKERK) are disordered. Topologically, residues 1–33 (MRDLHAKKQRVPHNRVKKPPKERKPINWGPILK) are cytoplasmic. Residues 7-21 (KKQRVPHNRVKKPPK) are compositionally biased toward basic residues. A helical transmembrane segment spans residues 34-56 (FASRGFGGAALCAGLGFGGWQLY). Residues 57 to 274 (NLVSRTTLLR…YADKIIVKKV (218 aa)) are Periplasmic-facing. One can recognise a POTRA domain in the interval 65–133 (LRLEAIEVSP…HTLSITVSER (69 aa)).

Belongs to the FtsQ/DivIB family. FtsQ subfamily.

The protein resides in the cell inner membrane. Essential cell division protein. This Geobacter sp. (strain M21) protein is Cell division protein FtsQ.